The following is a 777-amino-acid chain: Disintegrin and metalloproteinase domain-containing protein 5 (777 aa).

The first 16 residues, 1–16, serve as a signal peptide directing secretion; it reads MFLVLVLLTGLGRLYA. A propeptide spanning residues 17 to 142 is cleaved from the precursor; sequence GNNPRKTFVQ…VLSGFTHMIY (126 aa). The Extracellular portion of the chain corresponds to 17 to 706; the sequence is GNNPRKTFVQ…RGYVVLSTKR (690 aa). Asparagine 49 and asparagine 123 each carry an N-linked (GlcNAc...) asparagine glycan. A Peptidase M12B domain is found at 185 to 382; the sequence is RYIDMYIVVN…YGLTCLRNTS (198 aa). Intrachain disulfides connect cysteine 294-cysteine 377, cysteine 336-cysteine 361, cysteine 338-cysteine 343, and cysteine 456-cysteine 477. Positions 396 to 485 constitute a Disintegrin domain; sequence RRICGNSIRE…DCVHDTYAQN (90 aa). Asparagine 566 carries an N-linked (GlcNAc...) asparagine glycan. The EGF-like domain occupies 633-667; sequence NNGSCNAEIHCQGRGICNNLDNCHCHKGFVPPECA. 3 cysteine pairs are disulfide-bonded: cysteine 637–cysteine 649, cysteine 643–cysteine 655, and cysteine 657–cysteine 666. Residues 707–727 traverse the membrane as a helical segment; the sequence is FQLIFYIGIPVIIIVAAILIK. Topologically, residues 728–777 are cytoplasmic; that stretch reads QNQLGKLFCRGEKEHMSSVSEDGSRSVTLSATESKFPADTEHSNKEEDAQ. The segment covering 744 to 760 has biased composition (polar residues); sequence SSVSEDGSRSVTLSATE. Residues 744–777 form a disordered region; it reads SSVSEDGSRSVTLSATESKFPADTEHSNKEEDAQ. Residues 763-777 show a composition bias toward basic and acidic residues; it reads FPADTEHSNKEEDAQ.

As to quaternary structure, interacts with TEX101. Post-translationally, subject to proteolytic processing during epididymal transit of spermatozoa. Detected in testis.

It is found in the membrane. In terms of biological role, this is a non catalytic metalloprotease-like protein. May play a role in sperm-egg fusion. This Cavia porcellus (Guinea pig) protein is Disintegrin and metalloproteinase domain-containing protein 5 (ADAM5).